The sequence spans 351 residues: MSNKAATLLAALSGAALVAAHGHVSHIIVNGVYYQNYDPTTHFYQPNPPTVIGWSALQQDNGFVEPNNFGTTDIICHKSAAPGGGSATVNAGDKISIVWTPEWPESHIGPVIDYLANCNGPCETVDKTSLRWFKIGGAGYNPNTRTWAADDLRANGNSWLVQIPADLKAGNYVLRHEIIALHGGSSPNGAQAYPQCLNLRIVGNGNNSPAGVAGTSLYRANDAGILFNPYVASPNYPVPGPALIAGAVSSIPQSKSTATRTASATLPGAPVVTPTAGPVVTTSSAPVVQPPTTTLVTVTSAPATSAAPAPTGGAGVAPKWGQCGGNGWTGPTVCASGSTCTVLNPYYSQCI.

The signal sequence occupies residues 1 to 20 (MSNKAATLLAALSGAALVAA). Cu(2+) contacts are provided by histidine 21 and histidine 107. Cysteine 76 and cysteine 196 are oxidised to a cystine. O2 is bound by residues histidine 182 and glutamine 191. Tyrosine 193 serves as a coordination point for Cu(2+). Residues 315-351 (GVAPKWGQCGGNGWTGPTVCASGSTCTVLNPYYSQCI) form the CBM1 domain.

Belongs to the polysaccharide monooxygenase AA9 family. Requires Cu(2+) as cofactor.

Its subcellular location is the secreted. It catalyses the reaction [(1-&gt;4)-beta-D-glucosyl]n+m + reduced acceptor + O2 = 4-dehydro-beta-D-glucosyl-[(1-&gt;4)-beta-D-glucosyl]n-1 + [(1-&gt;4)-beta-D-glucosyl]m + acceptor + H2O.. In terms of biological role, lytic polysaccharide monooxygenase (LPMO) that depolymerizes crystalline and amorphous polysaccharides via the oxidation of scissile alpha- or beta-(1-4)-glycosidic bonds, yielding C1 and C4 oxidation products. Catalysis by LPMOs requires the reduction of the active-site copper from Cu(II) to Cu(I) by a reducing agent and H(2)O(2) or O(2) as a cosubstrate. The polypeptide is AA9 family lytic polysaccharide monooxygenase A (Podospora anserina (strain S / ATCC MYA-4624 / DSM 980 / FGSC 10383) (Pleurage anserina)).